Here is a 150-residue protein sequence, read N- to C-terminus: Ribosome-binding factor A (150 aa).

The interval 119-150 (VAERAKSAQPAGEPDPYRFDGAAAADDDEPAT) is disordered.

The protein belongs to the RbfA family. As to quaternary structure, monomer. Binds 30S ribosomal subunits, but not 50S ribosomal subunits or 70S ribosomes.

The protein resides in the cytoplasm. One of several proteins that assist in the late maturation steps of the functional core of the 30S ribosomal subunit. Associates with free 30S ribosomal subunits (but not with 30S subunits that are part of 70S ribosomes or polysomes). Required for efficient processing of 16S rRNA. May interact with the 5'-terminal helix region of 16S rRNA. This is Ribosome-binding factor A from Acidothermus cellulolyticus (strain ATCC 43068 / DSM 8971 / 11B).